Here is a 208-residue protein sequence, read N- to C-terminus: Small ribosomal subunit protein uS4 (208 aa).

One can recognise an S4 RNA-binding domain in the interval 98–161 (RRLDNVIYRL…RKIPVLAEAQ (64 aa)).

This sequence belongs to the universal ribosomal protein uS4 family. In terms of assembly, part of the 30S ribosomal subunit. Contacts protein S5. The interaction surface between S4 and S5 is involved in control of translational fidelity.

Functionally, one of the primary rRNA binding proteins, it binds directly to 16S rRNA where it nucleates assembly of the body of the 30S subunit. With S5 and S12 plays an important role in translational accuracy. This chain is Small ribosomal subunit protein uS4, found in Nitratidesulfovibrio vulgaris (strain ATCC 29579 / DSM 644 / CCUG 34227 / NCIMB 8303 / VKM B-1760 / Hildenborough) (Desulfovibrio vulgaris).